A 244-amino-acid chain; its full sequence is UDP-2,3-diacylglucosamine hydrolase (244 aa).

Mn(2+) is bound by residues Asp-8, His-10, Asp-41, Asn-79, and His-114. 79-80 (NR) serves as a coordination point for substrate. Residues Asp-122, Ser-160, Asn-164, Lys-167, and His-195 each contribute to the substrate site. Mn(2+) contacts are provided by His-195 and His-197.

Belongs to the LpxH family. Mn(2+) serves as cofactor.

The protein localises to the cell inner membrane. It carries out the reaction UDP-2-N,3-O-bis[(3R)-3-hydroxytetradecanoyl]-alpha-D-glucosamine + H2O = 2-N,3-O-bis[(3R)-3-hydroxytetradecanoyl]-alpha-D-glucosaminyl 1-phosphate + UMP + 2 H(+). The protein operates within glycolipid biosynthesis; lipid IV(A) biosynthesis; lipid IV(A) from (3R)-3-hydroxytetradecanoyl-[acyl-carrier-protein] and UDP-N-acetyl-alpha-D-glucosamine: step 4/6. Its function is as follows. Hydrolyzes the pyrophosphate bond of UDP-2,3-diacylglucosamine to yield 2,3-diacylglucosamine 1-phosphate (lipid X) and UMP by catalyzing the attack of water at the alpha-P atom. Involved in the biosynthesis of lipid A, a phosphorylated glycolipid that anchors the lipopolysaccharide to the outer membrane of the cell. In Marinobacter nauticus (strain ATCC 700491 / DSM 11845 / VT8) (Marinobacter aquaeolei), this protein is UDP-2,3-diacylglucosamine hydrolase.